The following is a 278-amino-acid chain: Bifunctional protein FolD (278 aa).

NADP(+) is bound by residues 163–165 (GRS), Ser188, and Val229.

This sequence belongs to the tetrahydrofolate dehydrogenase/cyclohydrolase family. As to quaternary structure, homodimer.

The catalysed reaction is (6R)-5,10-methylene-5,6,7,8-tetrahydrofolate + NADP(+) = (6R)-5,10-methenyltetrahydrofolate + NADPH. It catalyses the reaction (6R)-5,10-methenyltetrahydrofolate + H2O = (6R)-10-formyltetrahydrofolate + H(+). It participates in one-carbon metabolism; tetrahydrofolate interconversion. Functionally, catalyzes the oxidation of 5,10-methylenetetrahydrofolate to 5,10-methenyltetrahydrofolate and then the hydrolysis of 5,10-methenyltetrahydrofolate to 10-formyltetrahydrofolate. This chain is Bifunctional protein FolD, found in Exiguobacterium sp. (strain ATCC BAA-1283 / AT1b).